Reading from the N-terminus, the 657-residue chain is Interferon-induced GTP-binding protein Mx1 (657 aa).

Met-1 carries the post-translational modification N-acetylmethionine. In terms of domain architecture, Dynamin-type G spans 63–336 (DLALPAIAVI…LITHICKTLP (274 aa)). The tract at residues 73–80 (GDQSSGKS) is G1 motif. 73-80 (GDQSSGKS) provides a ligand contact to GTP. The interval 98-100 (VTR) is G2 motif. Residues 174 to 177 (DLPG) form a G3 motif region. Residues 174–178 (DLPGI) and 243–246 (TKPD) each bind GTP. The tract at residues 243–246 (TKPD) is G4 motif. Positions 275-278 (KCRG) are G5 motif. The interval 337–362 (LLENQIKENHEKITEELQKYGSDVPE) is bundle signaling element (BSE). The interval 362-529 (EDEHEKMFFL…HFQMEQIVYC (168 aa)) is middle domain. Positions 363 to 627 (DEHEKMFFLI…KDTYSWLLKE (265 aa)) are stalk. Basic and acidic residues predominate over residues 540–551 (RVREKDSDEEKK). The tract at residues 540-559 (RVREKDSDEEKKKKTSSMSH) is disordered. The critical for lipid-binding stretch occupies residues 550 to 553 (KKKK). The GED domain occupies 569-657 (LSEILEHLLA…ARRRLAKFPG (89 aa)).

The protein belongs to the TRAFAC class dynamin-like GTPase superfamily. Dynamin/Fzo/YdjA family. As to quaternary structure, homooligomer. Oligomerizes into multimeric filamentous or ring-like structures by virtue of its stalk domain. Oligomerization is critical for GTPase activity, protein stability, and recognition of viral target structures. Interacts with TRPC1, TRPC3, TRPC4, TRPC5, TRPC6 and TRPC7. Interacts with HSPA5. Interacts with TUBB/TUBB5. Interacts with DDX39A and DDX39B. ISGylated.

It is found in the cytoplasm. It localises to the endoplasmic reticulum membrane. Its subcellular location is the perinuclear region. Functionally, interferon-induced dynamin-like GTPase with antiviral activity. This Canis lupus familiaris (Dog) protein is Interferon-induced GTP-binding protein Mx1 (MX1).